Reading from the N-terminus, the 84-residue chain is Antitoxin VapB30 (84 aa).

In terms of biological role, antitoxin component of a type II toxin-antitoxin (TA) system. Upon expression in M.smegmatis neutralizes the effect of cognate toxin VapC30. In Mycobacterium tuberculosis (strain ATCC 25618 / H37Rv), this protein is Antitoxin VapB30 (vapB30).